The following is a 353-amino-acid chain: Putative protein SPATA31J1 (353 aa).

The chain crosses the membrane as a helical span at residues 34-54 (IPQIIHFVLFVVFSLVILIIL). The segment at 122–271 (EGSSHHLPRQ…NPGWVSWSDS (150 aa)) is disordered. Residues 182–195 (SVESLGSPSSLSSS) are compositionally biased toward low complexity. The span at 211 to 221 (PPASTLSPNPT) shows a compositional bias: polar residues. The segment covering 222-237 (SSTESLGYLSSLSSSQ) has biased composition (low complexity). Residues 244–262 (PLKHPSHKPRGRSLPRRRN) are compositionally biased toward basic residues.

It belongs to the SPATA31 family.

The protein resides in the membrane. In Homo sapiens (Human), this protein is Putative protein SPATA31J1.